A 417-amino-acid polypeptide reads, in one-letter code: Serine hydroxymethyltransferase (417 aa).

(6S)-5,6,7,8-tetrahydrofolate contacts are provided by residues Leu121 and 125 to 127; that span reads GHL. Lys229 carries the post-translational modification N6-(pyridoxal phosphate)lysine. Residue 355–357 participates in (6S)-5,6,7,8-tetrahydrofolate binding; the sequence is SPF.

It belongs to the SHMT family. Homodimer. Requires pyridoxal 5'-phosphate as cofactor.

Its subcellular location is the cytoplasm. It carries out the reaction (6R)-5,10-methylene-5,6,7,8-tetrahydrofolate + glycine + H2O = (6S)-5,6,7,8-tetrahydrofolate + L-serine. It participates in one-carbon metabolism; tetrahydrofolate interconversion. It functions in the pathway amino-acid biosynthesis; glycine biosynthesis; glycine from L-serine: step 1/1. In terms of biological role, catalyzes the reversible interconversion of serine and glycine with tetrahydrofolate (THF) serving as the one-carbon carrier. This reaction serves as the major source of one-carbon groups required for the biosynthesis of purines, thymidylate, methionine, and other important biomolecules. Also exhibits THF-independent aldolase activity toward beta-hydroxyamino acids, producing glycine and aldehydes, via a retro-aldol mechanism. In Yersinia enterocolitica serotype O:8 / biotype 1B (strain NCTC 13174 / 8081), this protein is Serine hydroxymethyltransferase.